We begin with the raw amino-acid sequence, 1080 residues long: DNA-directed RNA polymerase subunit beta C-terminal section (1080 aa).

The protein belongs to the RNA polymerase beta chain family. In terms of assembly, in plastids the minimal PEP RNA polymerase catalytic core is composed of four subunits: alpha, beta, beta', and beta''. When a (nuclear-encoded) sigma factor is associated with the core the holoenzyme is formed, which can initiate transcription.

It localises to the plastid. The protein localises to the chloroplast. The enzyme catalyses RNA(n) + a ribonucleoside 5'-triphosphate = RNA(n+1) + diphosphate. Its function is as follows. DNA-dependent RNA polymerase catalyzes the transcription of DNA into RNA using the four ribonucleoside triphosphates as substrates. This Stigeoclonium helveticum (Green alga) protein is DNA-directed RNA polymerase subunit beta C-terminal section (rpoB2).